A 171-amino-acid polypeptide reads, in one-letter code: Translationally-controlled tumor protein homolog (171 aa).

The 171-residue stretch at 1-171 (MIIYKDIITG…FKDGLEIEKC (171 aa)) folds into the TCTP domain.

The protein belongs to the TCTP family.

The protein localises to the cytoplasm. Involved in calcium binding and microtubule stabilization. This Danio rerio (Zebrafish) protein is Translationally-controlled tumor protein homolog (tpt1).